Reading from the N-terminus, the 777-residue chain is Zinc finger FYVE domain-containing protein 1 (777 aa).

Residues 416 to 777 (MAHSSFFPDE…FNCNKKPGDL (362 aa)) form a required for localization in the lipid droplets region. 2 FYVE-type zinc fingers span residues 598–659 (NSQI…DARN) and 715–775 (DHEI…KKPG). Zn(2+) is bound by residues Cys-604, Cys-607, Cys-620, Cys-623, Cys-628, Cys-631, Cys-651, Cys-654, Cys-721, Cys-724, Cys-737, Cys-740, Cys-745, Cys-748, Cys-767, and Cys-770.

Interacts with RAB18 (in GTP-bound form). Interacts with BSCL2 in a RAB18-dependent manner. Interacts with ZW10. As to expression, ubiquitous.

The protein localises to the golgi apparatus. It is found in the golgi stack. Its subcellular location is the endoplasmic reticulum. The protein resides in the preautophagosomal structure. It localises to the lipid droplet. The protein localises to the mitochondrion. Its function is as follows. Plays a role in the formation of lipid droplets (LDs) which are storage organelles at the center of lipid and energy homeostasis. Regulates the morphology, size and distribution of LDs. Mediates the formation of endoplasmic reticulum-lipid droplets (ER-LD) contact sites by forming a complex with RAB18 and ZW10. Binds to phosphatidylinositol 3-phosphate (PtdIns3P) through FYVE-type zinc finger. The protein is Zinc finger FYVE domain-containing protein 1 (Zfyve1) of Mus musculus (Mouse).